The following is a 299-amino-acid chain: MATELDKIFLILAIAEFIISMLGNVFIGLVNCSEGIKNQKVFSSDFILTSLAISTIGQLLVILFDSFLVGLASHLYTTYRLGKPVIMLWHMTNHLTTWLATCLSVFYFFKIAHFPHSLFLWLRWRMNGMIAMLLILSLFLLIFDSSVLEIFIDISLNIIDKSSLTLYLDESKTLYDKLSILKTLLSLTSFIPFSLSLTSVLFLYLSLVRHTRNLKLSSLGSRDSSTEAHRRAMKMVMSFLFLFIVHFFSLQVANWIFFMLWNNKYIKFVMLALNAFPSCHSFILILGNSKLRQTAVRLL.

The Extracellular segment spans residues 1–7 (MATELDK). Residues 8-28 (IFLILAIAEFIISMLGNVFIG) traverse the membrane as a helical segment. At 29 to 50 (LVNCSEGIKNQKVFSSDFILTS) the chain is on the cytoplasmic side. A helical transmembrane segment spans residues 51–71 (LAISTIGQLLVILFDSFLVGL). The Extracellular portion of the chain corresponds to 72-101 (ASHLYTTYRLGKPVIMLWHMTNHLTTWLAT). Residues 102-122 (CLSVFYFFKIAHFPHSLFLWL) form a helical membrane-spanning segment. The Cytoplasmic portion of the chain corresponds to 123-127 (RWRMN). The chain crosses the membrane as a helical span at residues 128-148 (GMIAMLLILSLFLLIFDSSVL). Topologically, residues 149-187 (EIFIDISLNIIDKSSLTLYLDESKTLYDKLSILKTLLSL) are extracellular. Residues 188–208 (TSFIPFSLSLTSVLFLYLSLV) form a helical membrane-spanning segment. Residues 209–238 (RHTRNLKLSSLGSRDSSTEAHRRAMKMVMS) lie on the Cytoplasmic side of the membrane. The helical transmembrane segment at 239–259 (FLFLFIVHFFSLQVANWIFFM) threads the bilayer. Topologically, residues 260-265 (LWNNKY) are extracellular. Residues 266–286 (IKFVMLALNAFPSCHSFILIL) traverse the membrane as a helical segment. Topologically, residues 287–299 (GNSKLRQTAVRLL) are cytoplasmic.

Belongs to the G-protein coupled receptor T2R family.

The protein localises to the membrane. Receptor that may play a role in the perception of bitterness and is gustducin-linked. May play a role in sensing the chemical composition of the gastrointestinal content. The activity of this receptor may stimulate alpha gustducin, mediate PLC-beta-2 activation and lead to the gating of TRPM5. The chain is Taste receptor type 2 member 42 (TAS2R42) from Gorilla gorilla gorilla (Western lowland gorilla).